A 70-amino-acid chain; its full sequence is UPF0270 protein VV1_1320 (70 aa).

The protein belongs to the UPF0270 family.

In Vibrio vulnificus (strain CMCP6), this protein is UPF0270 protein VV1_1320.